The primary structure comprises 463 residues: MQFRIEHDTMGEIKVNDSQYWGAQTQRSLENFKIGTEKMPKELIGAFAKLKRSLAVVNHKLGKLSLEKSQAIIKACDCILKGELCGEFPLAIWQTGSGTQTNMNLNEVIANKATEILGGNFREKKLIHPNDDVNMSQSSNDTFPTAMHIVSVLEITHRLLPSLENLLKTFKEKSQQFKEIVKIGRTHLQDATPLTLGQEFSGYASMLEHSKQQILESLEHLRELAIGGTAVGTGLNAHKELSEKVAEELSQFSGVKFVSAPNKFHALTSHDAIAYAHGAFKALAANLMKIANDIRWLASGPRCGLGELNIPENEPGSSIMPGKVNPTQCEAMTMVAVQVMGNDTAIGIAASQGNFELNVFKPVIIYNFLQSLRLLSDSMESFNIHCASGIEPNREKIDYYLHHSLMLVTALNPHVGYENAAKIAKNAHKKGISLKESALELKLLSAEDFDKFVVPEKMIGPKA.

Substrate-binding positions include 97-99, 128-131, 138-140, and T186; these read SGT, HPND, and SSN. Catalysis depends on H187, which acts as the Proton donor/acceptor. S317 is an active-site residue. Residues S318 and 323–325 contribute to the substrate site; that span reads KVN.

This sequence belongs to the class-II fumarase/aspartase family. Fumarase subfamily. Homotetramer.

The protein localises to the cytoplasm. The enzyme catalyses (S)-malate = fumarate + H2O. Its pathway is carbohydrate metabolism; tricarboxylic acid cycle; (S)-malate from fumarate: step 1/1. Its function is as follows. Involved in the TCA cycle. Catalyzes the stereospecific interconversion of fumarate to L-malate. The protein is Fumarate hydratase class II of Helicobacter pylori (strain ATCC 700392 / 26695) (Campylobacter pylori).